Consider the following 261-residue polypeptide: Sepiapterin reductase (261 aa).

The residue at position 1 (methionine 1) is an N-acetylmethionine. An NADP(+)-binding site is contributed by 14 to 20 (GASRGFG). Serine 32 is subject to Phosphoserine. NADP(+) contacts are provided by residues 42-43 (RN) and 69-70 (DL). Residue serine 103 is modified to Phosphoserine. Substrate is bound by residues 157 to 158 (SL) and tyrosine 170. Lysine 174 contacts NADP(+). Glycine 199 contacts substrate. Position 201-206 (201-206 (LDTDMQ)) interacts with NADP(+). Phosphoserine; by CaMK2; in vitro is present on serine 213. Aspartate 257 contacts substrate.

This sequence belongs to the sepiapterin reductase family. Homodimer. In terms of processing, in vitro phosphorylation of Ser-213 by CaMK2 does not change kinetic parameters.

The protein localises to the cytoplasm. The enzyme catalyses L-erythro-7,8-dihydrobiopterin + NADP(+) = L-sepiapterin + NADPH + H(+). The catalysed reaction is (6R)-L-erythro-5,6,7,8-tetrahydrobiopterin + 2 NADP(+) = 6-pyruvoyl-5,6,7,8-tetrahydropterin + 2 NADPH + 2 H(+). Its function is as follows. Catalyzes the final one or two reductions in tetra-hydrobiopterin biosynthesis to form 5,6,7,8-tetrahydrobiopterin. This chain is Sepiapterin reductase (SPR), found in Homo sapiens (Human).